The chain runs to 217 residues: Uracil-DNA glycosylase (217 aa).

The Proton acceptor role is filled by Asp-62.

This sequence belongs to the uracil-DNA glycosylase (UDG) superfamily. UNG family.

It localises to the cytoplasm. It carries out the reaction Hydrolyzes single-stranded DNA or mismatched double-stranded DNA and polynucleotides, releasing free uracil.. Its function is as follows. Excises uracil residues from the DNA which can arise as a result of misincorporation of dUMP residues by DNA polymerase or due to deamination of cytosine. This chain is Uracil-DNA glycosylase, found in Streptococcus pyogenes serotype M1.